Consider the following 58-residue polypeptide: Large ribosomal subunit protein bL32 (58 aa).

It belongs to the bacterial ribosomal protein bL32 family.

The protein is Large ribosomal subunit protein bL32 of Prochlorococcus marinus (strain MIT 9515).